We begin with the raw amino-acid sequence, 552 residues long: Glucose-6-phosphate isomerase (552 aa).

Glu359 serves as the catalytic Proton donor. Residues His390 and Lys514 contribute to the active site.

It belongs to the GPI family.

It is found in the cytoplasm. It carries out the reaction alpha-D-glucose 6-phosphate = beta-D-fructose 6-phosphate. The protein operates within carbohydrate biosynthesis; gluconeogenesis. It participates in carbohydrate degradation; glycolysis; D-glyceraldehyde 3-phosphate and glycerone phosphate from D-glucose: step 2/4. Functionally, catalyzes the reversible isomerization of glucose-6-phosphate to fructose-6-phosphate. This chain is Glucose-6-phosphate isomerase, found in Streptomyces griseus subsp. griseus (strain JCM 4626 / CBS 651.72 / NBRC 13350 / KCC S-0626 / ISP 5235).